We begin with the raw amino-acid sequence, 1244 residues long: DNA polymerase beta (1244 aa).

Repeat copies occupy residues 1069–1072 (AGNP), 1073–1076 (AGNP), 1077–1080 (AGNP), 1081–1084 (AGNP), 1085–1088 (AGNP), 1089–1092 (AGNP), 1093–1096 (AGNP), 1097–1100 (AGNP), 1101–1104 (AGNP), 1105–1108 (AGNP), 1109–1112 (AGNP), 1113–1116 (AGNP), and 1117–1120 (AGNP). A disordered region spans residues 1069–1118 (AGNPAGNPAGNPAGNPAGNPAGNPAGNPAGNPAGNPAGNPAGNPAGNPAG). The tract at residues 1069–1120 (AGNPAGNPAGNPAGNPAGNPAGNPAGNPAGNPAGNPAGNPAGNPAGNPAGNP) is 13 X 4 AA tandem repeats of A-G-N-P.

The protein belongs to the DNA polymerase type-B family.

The enzyme catalyses DNA(n) + a 2'-deoxyribonucleoside 5'-triphosphate = DNA(n+1) + diphosphate. Its function is as follows. DNA-directed DNA polymerase involved in viral DNA replication. This is DNA polymerase beta (DPOL) from African swine fever virus (isolate Pig/Portugal/Lis 60/1960) (ASFV).